The following is a 230-amino-acid chain: Ureidoacrylate amidohydrolase RutB (230 aa).

D24 acts as the Proton acceptor in catalysis. K133 is a catalytic residue. Catalysis depends on C166, which acts as the Nucleophile.

This sequence belongs to the isochorismatase family. RutB subfamily.

It catalyses the reaction (Z)-3-ureidoacrylate + H2O + H(+) = (Z)-3-aminoacrylate + NH4(+) + CO2. It carries out the reaction (Z)-3-ureidoacrylate + H2O = (Z)-3-aminoacrylate + carbamate + H(+). The catalysed reaction is (Z)-2-methylureidoacrylate + H2O + H(+) = (Z)-2-methylaminoacrylate + NH4(+) + CO2. Its function is as follows. Hydrolyzes ureidoacrylate to form aminoacrylate and carbamate. The carbamate hydrolyzes spontaneously, thereby releasing one of the nitrogen atoms of the pyrimidine ring as ammonia and one of its carbon atoms as CO2. The protein is Ureidoacrylate amidohydrolase RutB of Escherichia coli (strain K12 / MC4100 / BW2952).